The following is a 124-amino-acid chain: Glycine cleavage system H protein (124 aa).

In terms of domain architecture, Lipoyl-binding spans 22–104 (LVITGITDHA…YGKGWIYKIK (83 aa)). Lysine 63 carries the N6-lipoyllysine modification.

The protein belongs to the GcvH family. The glycine cleavage system is composed of four proteins: P, T, L and H. (R)-lipoate serves as cofactor.

The glycine cleavage system catalyzes the degradation of glycine. The H protein shuttles the methylamine group of glycine from the P protein to the T protein. The polypeptide is Glycine cleavage system H protein (Acinetobacter baumannii (strain ACICU)).